A 578-amino-acid polypeptide reads, in one-letter code: Acyl-CoA ligase AKT1 (578 aa).

Residues 210 to 218 (SSGTSGAQK), 350 to 355 (QCYGAT), D438, R457, and K554 each bind ATP. An SBD1 region spans residues 281-350 (DVEDLLSIVE…RHHPTWKTKQ (70 aa)). Positions 351–413 (CYGATEAGTA…VSSPSLAIGY (63 aa)) are SBD2. A Peroxisomal targeting signal type 1 motif is present at residues 576–578 (SKI).

The protein localises to the peroxisome. It functions in the pathway mycotoxin biosynthesis. Acyl-CoA ligase; part of the gene clusters that mediate the biosynthesis of the host-selective toxins (HSTs) AK-toxins responsible for Japanese pear black spot disease by the Japanese pear pathotype. AK-toxins are esters of 9,10-epoxy 8-hydroxy 9-methyldecatrienoic acid (EDA). On cellular level, AK-toxins affect plasma membrane of susceptible cells and cause a sudden increase in loss of K(+) after a few minutes of toxin treatment. The acyl-CoA ligase AKT1, the hydrolase AKT2 and enoyl-CoA hydratase AKT3 are all involved in the biosynthesis of the AK-, AF- and ACT-toxin common 9,10-epoxy-8-hydroxy-9-methyl-decatrienoic acid (EDA) structural moiety. Part of the EDA biosynthesis occurs in the peroxisome since these 3 enzymes are localized in peroxisomes. The exact roles of the 3 enzymes, as well as of additional AK-toxin clusters enzymes, including AKT4, AKT6 and AKTS1, have still to be elucidated. The Cytochrome P450 monooxygenase AKT7 on the other side functions to limit production of EDA and AK-toxin, probably via the catalysis of a side reaction of EDA or its precursor. The polypeptide is Acyl-CoA ligase AKT1 (Alternaria alternata (Alternaria rot fungus)).